A 379-amino-acid polypeptide reads, in one-letter code: Probable malonyl-CoA-acyl carrier protein transacylase, mitochondrial (379 aa).

The transit peptide at 1–23 (MLAARRLLRSPRITGALSWSRWS) directs the protein to the mitochondrion. Catalysis depends on residues Ser158 and His275.

It belongs to the type II malonyltransferase family.

The protein localises to the mitochondrion. It carries out the reaction holo-[ACP] + malonyl-CoA = malonyl-[ACP] + CoA. It participates in lipid metabolism; fatty acid biosynthesis. Functionally, catalyzes the transfer of a malonyl moiety from malonyl-CoA to the free thiol group of the phosphopantetheine arm of the ACP protein. This suggests the existence of the biosynthesis of fatty acids in mitochondria. The chain is Probable malonyl-CoA-acyl carrier protein transacylase, mitochondrial from Drosophila melanogaster (Fruit fly).